The chain runs to 208 residues: LexA repressor (208 aa).

A DNA-binding region (H-T-H motif) is located at residues R28 to K48. Active-site for autocatalytic cleavage activity residues include S125 and K162.

The protein belongs to the peptidase S24 family. In terms of assembly, homodimer.

The enzyme catalyses Hydrolysis of Ala-|-Gly bond in repressor LexA.. Represses a number of genes involved in the response to DNA damage (SOS response), including recA and lexA. In the presence of single-stranded DNA, RecA interacts with LexA causing an autocatalytic cleavage which disrupts the DNA-binding part of LexA, leading to derepression of the SOS regulon and eventually DNA repair. The protein is LexA repressor of Aliivibrio fischeri (strain ATCC 700601 / ES114) (Vibrio fischeri).